A 146-amino-acid chain; its full sequence is Transcription antitermination protein NusB (146 aa).

Belongs to the NusB family.

Functionally, involved in transcription antitermination. Required for transcription of ribosomal RNA (rRNA) genes. Binds specifically to the boxA antiterminator sequence of the ribosomal RNA (rrn) operons. This Solibacter usitatus (strain Ellin6076) protein is Transcription antitermination protein NusB.